We begin with the raw amino-acid sequence, 212 residues long: Uracil phosphoribosyltransferase (212 aa).

5-phospho-alpha-D-ribose 1-diphosphate is bound by residues Arg-78, Arg-103, and 130–138 (DPMLATGGS). Uracil-binding positions include Ile-193 and 198–200 (GDA). 5-phospho-alpha-D-ribose 1-diphosphate is bound at residue Asp-199.

The protein belongs to the UPRTase family. Mg(2+) is required as a cofactor.

The enzyme catalyses UMP + diphosphate = 5-phospho-alpha-D-ribose 1-diphosphate + uracil. The protein operates within pyrimidine metabolism; UMP biosynthesis via salvage pathway; UMP from uracil: step 1/1. Allosterically activated by GTP. Catalyzes the conversion of uracil and 5-phospho-alpha-D-ribose 1-diphosphate (PRPP) to UMP and diphosphate. The protein is Uracil phosphoribosyltransferase of Azotobacter vinelandii (strain DJ / ATCC BAA-1303).